A 574-amino-acid chain; its full sequence is Uric acid-xanthine permease (574 aa).

A disordered region spans residues 1–20; that stretch reads MDNSIHSTDGPDSVIPNSNP. The next 12 helical transmembrane spans lie at 77–97, 111–131, 141–161, 188–209, 217–237, 264–284, 296–315, 338–361, 427–447, 451–471, 482–502, and 522–542; these read LLAF…VVTP, LQQY…MVQI, YYIG…ISVA, AYGA…LAFV, IFPP…LIGT, LPWG…SIIL, CSVV…CGYF, VYGP…IGDV, CCLI…IVAI, VMGG…QAIV, FILT…TWFG, and LVLE…NAIM. Positions 555–574 are disordered; the sequence is MPVSAHDNRDGEAEYQSKQA. Residue K572 forms a Glycyl lysine isopeptide (Lys-Gly) (interchain with G-Cter in ubiquitin) linkage.

It belongs to the nucleobase:cation symporter-2 (NCS2) (TC 2.A.40) family. Post-translationally, ubiquitinated by hulA. Ubiquitination leads to internalization, sorting into the endosomal pathway to the vacuolar lumen where uapA is eventually degraded.

The protein localises to the cell membrane. Its function is as follows. Uric acid-xanthine transporter. The sequence is that of Uric acid-xanthine permease (uapA) from Emericella nidulans (strain FGSC A4 / ATCC 38163 / CBS 112.46 / NRRL 194 / M139) (Aspergillus nidulans).